Reading from the N-terminus, the 98-residue chain is NADH-ubiquinone oxidoreductase chain 4L (98 aa).

Helical transmembrane passes span 2–22 (PPIFANIILAFATAFLGTLIF), 29–49 (SLLCLEGMMLSMFILSTLIIL), and 61–81 (ILLLVFAACEAAIGLALLVMV).

This sequence belongs to the complex I subunit 4L family. As to quaternary structure, core subunit of respiratory chain NADH dehydrogenase (Complex I) which is composed of 45 different subunits.

The protein resides in the mitochondrion inner membrane. It catalyses the reaction a ubiquinone + NADH + 5 H(+)(in) = a ubiquinol + NAD(+) + 4 H(+)(out). Its function is as follows. Core subunit of the mitochondrial membrane respiratory chain NADH dehydrogenase (Complex I) which catalyzes electron transfer from NADH through the respiratory chain, using ubiquinone as an electron acceptor. Part of the enzyme membrane arm which is embedded in the lipid bilayer and involved in proton translocation. The chain is NADH-ubiquinone oxidoreductase chain 4L (MT-ND4L) from Avahi unicolor (Sambirano woolly lemur).